A 56-amino-acid chain; its full sequence is Large ribosomal subunit protein bL32 (56 aa).

The interval 1–56 (MAVPARRTSKAKKNKRRTHKGLTTPGLSRDSETGEYRMSHRISPDGTYKGRTIIEK) is disordered. Residues 7–20 (RTSKAKKNKRRTHK) show a composition bias toward basic residues. The segment covering 29–38 (RDSETGEYRM) has biased composition (basic and acidic residues).

Belongs to the bacterial ribosomal protein bL32 family.

The chain is Large ribosomal subunit protein bL32 from Listeria monocytogenes serotype 4a (strain HCC23).